A 402-amino-acid polypeptide reads, in one-letter code: Aminotransferase-like protein FGM3 (402 aa).

Pyridoxal 5'-phosphate is bound by residues 137 to 138 (TI), Asp-218, and 282 to 283 (FG).

It belongs to the class-V pyridoxal-phosphate-dependent aminotransferase family. Csd subfamily.

Functionally, aminotransferase-like protein; part of the Fg3_54/C64 gene cluster that mediates the biosynthesis of the octapeptide fusaoctaxin A, a virulence factor that is required for cell-to-cell invasiveness of plant host. The 2 nonribosomal peptide synthetases NRPS9 and NRPS5 form an assembly line which likely utilizes GABA as a starter unit (loaded on the unique module M1 of NRPS9) and sequentially incorporates seven extender units composed of the residues L-Ala, L-allo-Ile, L-Ser, L-Val, L-Ser, L-Leu and L-Leu, respectively. During the process, each of the residues that are tethered on modules M3-M7 of NRPS5 containing an E domain can undergo an epimerization reaction to produce a D-configuration before the transpeptidation reaction occurs. The elongation of the peptidyl chain might be terminated by module M8-mediated L-Leu incorporation, followed by R domain-catalyzed 4 electron reduction to release the resulting octapeptide from the assembly line as an alcohol. Fusaoctaxin A is cleaved by the cluster specific ABC transporter FGM5 to the pentapeptide fusapentaxin A and the tripeptide fusatrixin A. The other enzymes from the cluster, FGM1, FGM2, FGM3 and FGM9 seem not to be involved in the biosynthesis of fusaoctaxin A and their functions have still to be determined. The chain is Aminotransferase-like protein FGM3 from Gibberella zeae (strain ATCC MYA-4620 / CBS 123657 / FGSC 9075 / NRRL 31084 / PH-1) (Wheat head blight fungus).